The following is a 149-amino-acid chain: Secreted RxLR effector protein 17 (149 aa).

Positions 1-24 (MRLFYFSAMSVIGLLARNNMVVVA) are cleaved as a signal peptide. Positions 52–78 (RSLRTREKDIQDSTVAKDDAIKVEEDR) match the RxLR-dEER motif.

Belongs to the RxLR effector family.

The protein localises to the secreted. It is found in the host cytoplasm. Its subcellular location is the host nucleus. Effector that acts as a broad suppressor of cell death to interrupt plant immunity. Inhibits cell death induced by cell death-inducing proteins, including the PAMP elicitor INF1 from P.infestans. The polypeptide is Secreted RxLR effector protein 17 (Plasmopara viticola (Downy mildew of grapevine)).